Reading from the N-terminus, the 89-residue chain is Small ribosomal subunit protein uS15 (89 aa).

Positions 1–10 are enriched in basic and acidic residues; it reads MSITAERKAE. The tract at residues 1–24 is disordered; it reads MSITAERKAEVIQGNANKAGDTGS.

It belongs to the universal ribosomal protein uS15 family. In terms of assembly, part of the 30S ribosomal subunit. Forms a bridge to the 50S subunit in the 70S ribosome, contacting the 23S rRNA.

In terms of biological role, one of the primary rRNA binding proteins, it binds directly to 16S rRNA where it helps nucleate assembly of the platform of the 30S subunit by binding and bridging several RNA helices of the 16S rRNA. Forms an intersubunit bridge (bridge B4) with the 23S rRNA of the 50S subunit in the ribosome. This Rhodopseudomonas palustris (strain HaA2) protein is Small ribosomal subunit protein uS15.